Consider the following 219-residue polypeptide: Acetylxylan esterase (219 aa).

Ser15 serves as the catalytic Nucleophile. Catalysis depends on charge relay system residues Asp191 and His194.

This sequence belongs to the 'GDSL' lipolytic enzyme family. As to quaternary structure, homooctamer, presenting a unique donut-shaped quaternary structure built of two staggered tetrameric rings. The eight active sites are organized in four closely situated pairs, which face the relatively wide internal cavity.

It is found in the cytoplasm. It carries out the reaction Deacetylation of xylans and xylo-oligosaccharides.. The protein operates within glycan degradation; xylan degradation. In terms of biological role, acetylxylan esterase involved in the degradation of xylan, a major structural heterogeneous polysaccharide found in plant biomass representing the second most abundant polysaccharide in the biosphere, after cellulose. Cleaves acetyl side groups from the xylose backbone units of the hemicellulolytic polymer xylan and xylo-oligosaccharides. Hydrolyzes about 20%-30% of the available acetyl groups on fully acetylated birch wood xylan. Completely deacetylates xylobiose peracetate (fully acetylated), and is active on both the alpha- and beta-forms of the sugar. Also hydrolyzes fully acetylated methyl-beta-D-xylopyranoside and methyl-beta-D-glucopyranoside, and the synthetic substrates 2-naphthyl acetate, 4-nitrophenyl acetate, 4-methylumbelliferyl acetate, and phenyl acetate. This chain is Acetylxylan esterase, found in Geobacillus stearothermophilus (Bacillus stearothermophilus).